The primary structure comprises 163 residues: Cytochrome c-type biogenesis protein CcmE (163 aa).

The Cytoplasmic segment spans residues 1–7 (MTRKQRR). Residues 8-28 (LVFIGTCGAVLAVALGLVLWA) form a helical; Signal-anchor for type II membrane protein membrane-spanning segment. Residues 29 to 163 (MSGTIVFFRS…RTASGEARAP (135 aa)) are Periplasmic-facing. Residues histidine 122 and tyrosine 126 each contribute to the heme site. Residues 134 to 163 (ALKKSGRWQEGAGHPAPAPPRTASGEARAP) are disordered.

It belongs to the CcmE/CycJ family.

The protein localises to the cell inner membrane. Functionally, heme chaperone required for the biogenesis of c-type cytochromes. Transiently binds heme delivered by CcmC and transfers the heme to apo-cytochromes in a process facilitated by CcmF and CcmH. The chain is Cytochrome c-type biogenesis protein CcmE from Methylobacterium sp. (strain 4-46).